The sequence spans 127 residues: Histone H2B type 1-A (127 aa).

Residues 1 to 36 (MPEVSSKGATISKKGFKKAVVKTQKKEGKKRKRTRK) form a disordered region. P2 carries the N-acetylproline modification. N6-acetyllysine; alternate occurs at positions 7, 13, 14, 17, 18, 22, and 25. N6-crotonyllysine; alternate is present on residues K7, K13, K14, K17, K18, K22, K25, and K36. Residues K7 and K13 each carry the N6-lactoyllysine; alternate modification. A Glycyl lysine isopeptide (Lys-Gly) (interchain with G-Cter in SUMO2); alternate cross-link involves residue K7. An N6-lactoyllysine; alternate mark is found at K17, K18, K22, and K25. Residue K22 forms a Glycyl lysine isopeptide (Lys-Gly) (interchain with G-Cter in SUMO2); alternate linkage. K36 is subject to N6-succinyllysine; alternate. K36 participates in a covalent cross-link: Glycyl lysine isopeptide (Lys-Gly) (interchain with G-Cter in ubiquitin); alternate. S38 carries the post-translational modification Phosphoserine. K45 is subject to N6-lactoyllysine; alternate. Position 48 is an N6-methyllysine (K48). K59 is modified (N6,N6-dimethyllysine). The residue at position 81 (R81) is a Dimethylated arginine. S86 is subject to Phosphoserine. K87 is subject to N6-acetyllysine; alternate. K87 is subject to N6-lactoyllysine; alternate. Position 87 is an N6,N6,N6-trimethyllysine; alternate (K87). An omega-N-methylarginine mark is found at R88 and R94. K110 carries the post-translational modification N6-lactoyllysine; alternate. An N6-methyllysine modification is found at K110. Position 117 is a phosphothreonine (T117). 2 positions are modified to N6-lactoyllysine; alternate: K118 and K122. 2 positions are modified to N6-succinyllysine; alternate: K118 and K122. K118 is modified (N6-methylated lysine; alternate). A Glycyl lysine isopeptide (Lys-Gly) (interchain with G-Cter in ubiquitin); alternate cross-link involves residue K122.

It belongs to the histone H2B family. In terms of assembly, the nucleosome is a histone octamer containing two molecules each of H2A, H2B, H3 and H4 assembled in one H3-H4 heterotetramer and two H2A-H2B heterodimers. Monoubiquitination at Lys-36 (H2BK34Ub) by the MSL1/MSL2 dimer is required for histone H3 'Lys-4' (H3K4me) and 'Lys-79' (H3K79me) methylation and transcription activation at specific gene loci, such as HOXA9 and MEIS1 loci. Similarly, monoubiquitination at Lys-122 (H2BK120Ub) by the RNF20/40 complex gives a specific tag for epigenetic transcriptional activation and is also prerequisite for histone H3 'Lys-4' and 'Lys-79' methylation. It also functions cooperatively with the FACT dimer to stimulate elongation by RNA polymerase II. H2BK120Ub also acts as a regulator of mRNA splicing: deubiquitination by USP49 is required for efficient cotranscriptional splicing of a large set of exons. Post-translationally, crotonylation (Kcr) is specifically present in male germ cells and marks testis-specific genes in post-meiotic cells, including X-linked genes that escape sex chromosome inactivation in haploid cells. Crotonylation marks active promoters and enhancers and confers resistance to transcriptional repressors. It is also associated with post-meiotically activated genes on autosomes. In terms of processing, acetylated during spermatogenesis. Acetylated form is most abundant in spermatogonia compared to spermatocytes and round spermatids. Phosphorylated at Thr-117 in spermatogonia, spermatocytes and round spermatids. Post-translationally, methylated at Lys-118 in spermatogonia, spermatocytes and round spermatids. In terms of processing, lactylated in macrophages by EP300/P300 by using lactoyl-CoA directly derived from endogenous or exogenous lactate, leading to stimulates gene transcription. In terms of tissue distribution, mainly expressed in testis, and the corresponding protein is also present in mature sperm (at protein level). Also found in some fat cells.

The protein localises to the nucleus. It is found in the chromosome. Functionally, variant histone specifically required to direct the transformation of dissociating nucleosomes to protamine in male germ cells. Entirely replaces classical histone H2B prior nucleosome to protamine transition and probably acts as a nucleosome dissociating factor that creates a more dynamic chromatin, facilitating the large-scale exchange of histones. Core component of nucleosome. Nucleosomes wrap and compact DNA into chromatin, limiting DNA accessibility to the cellular machineries which require DNA as a template. Histones thereby play a central role in transcription regulation, DNA repair, DNA replication and chromosomal stability. DNA accessibility is regulated via a complex set of post-translational modifications of histones, also called histone code, and nucleosome remodeling. Also found in fat cells, its function and the presence of post-translational modifications specific to such cells are still unclear. In Homo sapiens (Human), this protein is Histone H2B type 1-A.